The following is a 234-amino-acid chain: Meiotically up-regulated gene 35 protein (234 aa).

Positions 126-156 (DSSGDLTSTDKERDVSPVSHSEKPYWDRYDL) are enriched in basic and acidic residues. Positions 126 to 176 (DSSGDLTSTDKERDVSPVSHSEKPYWDRYDLDQPSNQDVEESRNLVQEPKH) are disordered. 2 positions are modified to phosphoserine: serine 127 and serine 128. Threonine 132 carries the post-translational modification Phosphothreonine. Serine 141 carries the post-translational modification Phosphoserine.

The protein resides in the cytoplasm. Has a role in meiosis. The protein is Meiotically up-regulated gene 35 protein (mug35) of Schizosaccharomyces pombe (strain 972 / ATCC 24843) (Fission yeast).